The primary structure comprises 207 residues: Protein lin-7 homolog B (207 aa).

Residues 1–13 carry the Kinase interacting site motif; the sequence is MAALVEPLGLERD. One can recognise an L27 domain in the interval 10–65; that stretch reads LERDVSRAVELLERLQRSGELPPQKLQALQRVLQSRFCSAIREVYEQLYDTLDITG. The PDZ domain maps to 93–175; that stretch reads VVELPKTDEG…SVKLVVRYTP (83 aa). Residues 187 to 207 form a disordered region; sequence KMRSARRRQQHQSYSSLESRG. A compositionally biased stretch (polar residues) spans 197-207; sequence HQSYSSLESRG.

The protein belongs to the lin-7 family. In terms of assembly, forms a complex with CASK and CASKIN1. Component of the brain-specific heterotrimeric complex (LIN-10-LIN-2-LIN-7 complex) composed of at least APBA1, CASK, and LIN7, which associates with the motor protein KIF17 to transport vesicles along microtubules. Forms a heterotrimeric complex composed of MMP5, LIN7B and PATJ; the N-terminal L27 domain of PALS1 interacts with the L27 domain of PATJ and the C-terminal L27 domain of PALS1 interacts with the L27 domain of LIN7B. Forms a heterotrimeric complex with DLG1 and CASK via their L27 domains. Interacts with DLG4 and GRIN2B as well as CDH1 and CTNNB1, the channels KCNJ12/Kir2.2, KCNJ4/Kir2.3 and probably KCNJ2/Kir2.1 and SLC6A12/BGT-1 via its PDZ domain. The association of LIN7A with cadherin and beta-catenin is calcium-dependent, occurs at synaptic junctions and requires the actin cytoskeleton. Interacts with EGFR, ERBB2, ERBB3 and ERBB4 with both PDZ and KID domains. Associates with KIF17 via APBA1. Interacts with ASIC3. Interacts with TOPK. Interacts with RTKN. Interacts with APBA1. Interacts with MPP7. Interacts with DLG2. Interacts with DLG3.

Its subcellular location is the cell membrane. It is found in the basolateral cell membrane. It localises to the cell junction. The protein resides in the postsynaptic density membrane. The protein localises to the tight junction. In terms of biological role, plays a role in establishing and maintaining the asymmetric distribution of channels and receptors at the plasma membrane of polarized cells. Forms membrane-associated multiprotein complexes that may regulate delivery and recycling of proteins to the correct membrane domains. The tripartite complex composed of LIN7 (LIN7A, LIN7B or LIN7C), CASK and APBA1 associates with the motor protein KIF17 to transport vesicles containing N-methyl-D-aspartate (NMDA) receptor subunit NR2B along microtubules. This complex may have the potential to couple synaptic vesicle exocytosis to cell adhesion in brain. Ensures the proper localization of GRIN2B (subunit 2B of the NMDA receptor) to neuronal postsynaptic density and may function in localizing synaptic vesicles at synapses where it is recruited by beta-catenin and cadherin. Required to localize Kir2 channels, GABA transporter (SLC6A12) and EGFR/ERBB1, ERBB2, ERBB3 and ERBB4 to the basolateral membrane of epithelial cells. May increase the amplitude of ASIC3 acid-evoked currents by stabilizing the channel at the cell surface. This Homo sapiens (Human) protein is Protein lin-7 homolog B (LIN7B).